The chain runs to 333 residues: 5-formaminoimidazole-4-carboxamide-1-(beta)-D-ribofuranosyl 5'-monophosphate synthetase (333 aa).

5-amino-1-(5-phospho-beta-D-ribosyl)imidazole-4-carboxamide contacts are provided by histidine 9 and serine 73. The 231-residue stretch at 94-324 (RNLFEWEANQ…ISREIKLAIN (231 aa)) folds into the ATP-grasp domain. Residues 124-184 (PEDI…VPMY) and glutamate 206 each bind ATP. A 5-amino-1-(5-phospho-beta-D-ribosyl)imidazole-4-carboxamide-binding site is contributed by asparagine 230. Mg(2+)-binding residues include glutamate 269 and glutamate 282.

Belongs to the phosphohexose mutase family. Mg(2+) is required as a cofactor. Requires Mn(2+) as cofactor.

The catalysed reaction is 5-amino-1-(5-phospho-beta-D-ribosyl)imidazole-4-carboxamide + formate + ATP = 5-formamido-1-(5-phospho-D-ribosyl)imidazole-4-carboxamide + ADP + phosphate. It functions in the pathway purine metabolism; IMP biosynthesis via de novo pathway; 5-formamido-1-(5-phospho-D-ribosyl)imidazole-4-carboxamide from 5-amino-1-(5-phospho-D-ribosyl)imidazole-4-carboxamide (formate route): step 1/1. Its function is as follows. Catalyzes the ATP- and formate-dependent formylation of 5-aminoimidazole-4-carboxamide-1-beta-d-ribofuranosyl 5'-monophosphate (AICAR) to 5-formaminoimidazole-4-carboxamide-1-beta-d-ribofuranosyl 5'-monophosphate (FAICAR) in the absence of folates. The protein is 5-formaminoimidazole-4-carboxamide-1-(beta)-D-ribofuranosyl 5'-monophosphate synthetase of Sulfurisphaera tokodaii (strain DSM 16993 / JCM 10545 / NBRC 100140 / 7) (Sulfolobus tokodaii).